The chain runs to 224 residues: UPF0758 protein NE1464 (224 aa).

One can recognise an MPN domain in the interval 102 to 224 (IMDSPQSVRN…VVSFAERGLI (123 aa)). Zn(2+) contacts are provided by His-173, His-175, and Asp-186. The JAMM motif motif lies at 173-186 (HNHPSGIAEPSTAD).

It belongs to the UPF0758 family.

The chain is UPF0758 protein NE1464 from Nitrosomonas europaea (strain ATCC 19718 / CIP 103999 / KCTC 2705 / NBRC 14298).